Here is a 230-residue protein sequence, read N- to C-terminus: Uracil-DNA glycosylase (230 aa).

Asp-70 (proton acceptor) is an active-site residue.

This sequence belongs to the uracil-DNA glycosylase (UDG) superfamily. UNG family.

It is found in the cytoplasm. It carries out the reaction Hydrolyzes single-stranded DNA or mismatched double-stranded DNA and polynucleotides, releasing free uracil.. Functionally, excises uracil residues from the DNA which can arise as a result of misincorporation of dUMP residues by DNA polymerase or due to deamination of cytosine. In Pseudomonas putida (strain W619), this protein is Uracil-DNA glycosylase.